The primary structure comprises 180 residues: ATP-dependent protease subunit HslV (180 aa).

Threonine 5 is an active-site residue. Residues glycine 161, cysteine 164, and threonine 167 each contribute to the Na(+) site.

It belongs to the peptidase T1B family. HslV subfamily. In terms of assembly, a double ring-shaped homohexamer of HslV is capped on each side by a ring-shaped HslU homohexamer. The assembly of the HslU/HslV complex is dependent on binding of ATP.

It localises to the cytoplasm. It catalyses the reaction ATP-dependent cleavage of peptide bonds with broad specificity.. Allosterically activated by HslU binding. Protease subunit of a proteasome-like degradation complex believed to be a general protein degrading machinery. This is ATP-dependent protease subunit HslV from Campylobacter jejuni subsp. jejuni serotype O:2 (strain ATCC 700819 / NCTC 11168).